A 61-amino-acid chain; its full sequence is Small ribosomal subunit protein uS14 (61 aa).

Cys24, Cys27, Cys40, and Cys43 together coordinate Zn(2+).

It belongs to the universal ribosomal protein uS14 family. Zinc-binding uS14 subfamily. Part of the 30S ribosomal subunit. Contacts proteins S3 and S10. Zn(2+) is required as a cofactor.

Functionally, binds 16S rRNA, required for the assembly of 30S particles and may also be responsible for determining the conformation of the 16S rRNA at the A site. The chain is Small ribosomal subunit protein uS14 from Malacoplasma penetrans (strain HF-2) (Mycoplasma penetrans).